A 311-amino-acid chain; its full sequence is Ribonuclease HIII (311 aa).

The region spanning M95–K311 is the RNase H type-2 domain. Residues D101, E102, and D206 each coordinate a divalent metal cation.

It belongs to the RNase HII family. RnhC subfamily. Mn(2+) is required as a cofactor. The cofactor is Mg(2+).

The protein resides in the cytoplasm. The enzyme catalyses Endonucleolytic cleavage to 5'-phosphomonoester.. Its function is as follows. Endonuclease that specifically degrades the RNA of RNA-DNA hybrids. This Bacillus thuringiensis subsp. konkukian (strain 97-27) protein is Ribonuclease HIII.